Reading from the N-terminus, the 194-residue chain is uncharacterized protein (194 aa).

This is an uncharacterized protein from Escherichia coli (strain K12).